A 328-amino-acid polypeptide reads, in one-letter code: Ribosomal RNA small subunit methyltransferase H (328 aa).

S-adenosyl-L-methionine contacts are provided by residues 37-39 (GGH), aspartate 57, phenylalanine 83, aspartate 104, and glutamine 111.

The protein belongs to the methyltransferase superfamily. RsmH family.

It localises to the cytoplasm. The catalysed reaction is cytidine(1402) in 16S rRNA + S-adenosyl-L-methionine = N(4)-methylcytidine(1402) in 16S rRNA + S-adenosyl-L-homocysteine + H(+). Specifically methylates the N4 position of cytidine in position 1402 (C1402) of 16S rRNA. The sequence is that of Ribosomal RNA small subunit methyltransferase H from Neisseria meningitidis serogroup B (strain ATCC BAA-335 / MC58).